Reading from the N-terminus, the 352-residue chain is Probable dual-specificity RNA methyltransferase RlmN (352 aa).

The Proton acceptor role is filled by Glu-99. The region spanning 105-339 is the Radical SAM core domain; sequence TKSRTTACVS…VTVRRSRGKD (235 aa). An intrachain disulfide couples Cys-112 to Cys-344. [4Fe-4S] cluster-binding residues include Cys-119, Cys-123, and Cys-126. Residues 170 to 171, Ser-202, 225 to 227, and Asn-301 contribute to the S-adenosyl-L-methionine site; these read GE and SLH. Cys-344 acts as the S-methylcysteine intermediate in catalysis.

It belongs to the radical SAM superfamily. RlmN family. [4Fe-4S] cluster serves as cofactor.

Its subcellular location is the cytoplasm. The enzyme catalyses adenosine(2503) in 23S rRNA + 2 reduced [2Fe-2S]-[ferredoxin] + 2 S-adenosyl-L-methionine = 2-methyladenosine(2503) in 23S rRNA + 5'-deoxyadenosine + L-methionine + 2 oxidized [2Fe-2S]-[ferredoxin] + S-adenosyl-L-homocysteine. It carries out the reaction adenosine(37) in tRNA + 2 reduced [2Fe-2S]-[ferredoxin] + 2 S-adenosyl-L-methionine = 2-methyladenosine(37) in tRNA + 5'-deoxyadenosine + L-methionine + 2 oxidized [2Fe-2S]-[ferredoxin] + S-adenosyl-L-homocysteine. In terms of biological role, specifically methylates position 2 of adenine 2503 in 23S rRNA and position 2 of adenine 37 in tRNAs. This Christiangramia forsetii (strain DSM 17595 / CGMCC 1.15422 / KT0803) (Gramella forsetii) protein is Probable dual-specificity RNA methyltransferase RlmN.